Reading from the N-terminus, the 983-residue chain is Ephrin type-A receptor 3 (983 aa).

A signal peptide spans 1 to 19 (MDRRRLPLLLLCAALGSAG). The Extracellular portion of the chain corresponds to 20-540 (RLSARPGNEV…SFSISSENSQ (521 aa)). The region spanning 28–206 (EVNLLDSKTI…YFKKCPFTVK (179 aa)) is the Eph LBD domain. N-linked (GlcNAc...) asparagine glycans are attached at residues N231, N336, N390, N403, and N492. 2 consecutive Fibronectin type-III domains span residues 324 to 434 (PPSA…TNQA) and 435 to 530 (APSP…TSPD). Residues 541 to 564 (VVMIAISAAVAIILLTVVVYVLIG) form a helical membrane-spanning segment. The Cytoplasmic segment spans residues 565–983 (RFCGYKKSKH…THTKNSPVPV (419 aa)). A phosphotyrosine; by autocatalysis mark is found at Y596 and Y602. The Protein kinase domain maps to 621–882 (ISIDKVVGAG…QIVSILDKLI (262 aa)). ATP is bound by residues 628-633 (GAGEFG), K653, and 700-706 (EYMENGS). At Y701 the chain carries Phosphotyrosine; by autocatalysis. D746 (proton acceptor) is an active-site residue. 750–751 (RN) lines the ATP pocket. Y779 carries the phosphotyrosine; by autocatalysis modification. The region spanning 911-975 (SAFRTAGDWL…VSSIKTLETH (65 aa)) is the SAM domain. The short motif at 981–983 (VPV) is the PDZ-binding element.

This sequence belongs to the protein kinase superfamily. Tyr protein kinase family. Ephrin receptor subfamily. Heterotetramer upon binding of the ligand. The heterotetramer is composed of an ephrin dimer and a receptor dimer. Oligomerization is probably required to induce biological responses. Autophosphorylates upon activation by EFNA5. As to expression, highly expressed in the developing brain and embryonic tissues. In adult, the greatest levels of expression occur in the brain. It is expressed in a graded manner across the retina with the highest expression at its temporal pole. Detectable in all other adult tissues examined, except the liver.

It localises to the cell membrane. It catalyses the reaction L-tyrosyl-[protein] + ATP = O-phospho-L-tyrosyl-[protein] + ADP + H(+). Functionally, receptor tyrosine kinase which binds promiscuously membrane-bound ephrin family ligands residing on adjacent cells, leading to contact-dependent bidirectional signaling into neighboring cells. The signaling pathway downstream of the receptor is referred to as forward signaling while the signaling pathway downstream of the ephrin ligand is referred to as reverse signaling. Highly promiscuous for ephrin-A ligands it binds preferentially EFNA5. Upon activation by EFNA5 regulates cell-cell adhesion, cytoskeletal organization and cell migration. Plays a role in cardiac cells migration and differentiation probably through activation by EFNA1. Involved in the retinotectal mapping of neurons. May also control the segregation but not the guidance of motor and sensory axons during neuromuscular circuit development. The chain is Ephrin type-A receptor 3 (EPHA3) from Gallus gallus (Chicken).